The sequence spans 141 residues: Ribosome-binding factor A (141 aa).

Residues 120-141 form a disordered region; the sequence is SPHVQRDLQENDDQEDDSEGSL. Over residues 129–141 the composition is skewed to acidic residues; the sequence is ENDDQEDDSEGSL.

The protein belongs to the RbfA family. In terms of assembly, monomer. Binds 30S ribosomal subunits, but not 50S ribosomal subunits or 70S ribosomes.

It localises to the cytoplasm. Its function is as follows. One of several proteins that assist in the late maturation steps of the functional core of the 30S ribosomal subunit. Associates with free 30S ribosomal subunits (but not with 30S subunits that are part of 70S ribosomes or polysomes). Required for efficient processing of 16S rRNA. May interact with the 5'-terminal helix region of 16S rRNA. The sequence is that of Ribosome-binding factor A from Zymomonas mobilis subsp. mobilis (strain ATCC 31821 / ZM4 / CP4).